Consider the following 374-residue polypeptide: UDP-N-acetylglucosamine--N-acetylmuramyl-(pentapeptide) pyrophosphoryl-undecaprenol N-acetylglucosamine transferase (374 aa).

UDP-N-acetyl-alpha-D-glucosamine-binding positions include 13–15 (TGG), N124, R165, S193, and Q294.

This sequence belongs to the glycosyltransferase 28 family. MurG subfamily.

It localises to the cell inner membrane. The enzyme catalyses di-trans,octa-cis-undecaprenyl diphospho-N-acetyl-alpha-D-muramoyl-L-alanyl-D-glutamyl-meso-2,6-diaminopimeloyl-D-alanyl-D-alanine + UDP-N-acetyl-alpha-D-glucosamine = di-trans,octa-cis-undecaprenyl diphospho-[N-acetyl-alpha-D-glucosaminyl-(1-&gt;4)]-N-acetyl-alpha-D-muramoyl-L-alanyl-D-glutamyl-meso-2,6-diaminopimeloyl-D-alanyl-D-alanine + UDP + H(+). It functions in the pathway cell wall biogenesis; peptidoglycan biosynthesis. Its function is as follows. Cell wall formation. Catalyzes the transfer of a GlcNAc subunit on undecaprenyl-pyrophosphoryl-MurNAc-pentapeptide (lipid intermediate I) to form undecaprenyl-pyrophosphoryl-MurNAc-(pentapeptide)GlcNAc (lipid intermediate II). This Sinorhizobium medicae (strain WSM419) (Ensifer medicae) protein is UDP-N-acetylglucosamine--N-acetylmuramyl-(pentapeptide) pyrophosphoryl-undecaprenol N-acetylglucosamine transferase.